The sequence spans 440 residues: NADH-quinone oxidoreductase subunit D (440 aa).

Belongs to the complex I 49 kDa subunit family. NDH-1 is composed of 14 different subunits. Subunits NuoB, C, D, E, F, and G constitute the peripheral sector of the complex.

The protein localises to the cell membrane. It catalyses the reaction a quinone + NADH + 5 H(+)(in) = a quinol + NAD(+) + 4 H(+)(out). Functionally, NDH-1 shuttles electrons from NADH, via FMN and iron-sulfur (Fe-S) centers, to quinones in the respiratory chain. The immediate electron acceptor for the enzyme in this species is believed to be a menaquinone. Couples the redox reaction to proton translocation (for every two electrons transferred, four hydrogen ions are translocated across the cytoplasmic membrane), and thus conserves the redox energy in a proton gradient. The sequence is that of NADH-quinone oxidoreductase subunit D from Acidothermus cellulolyticus (strain ATCC 43068 / DSM 8971 / 11B).